Here is a 316-residue protein sequence, read N- to C-terminus: MTVQRKKISLIGAGNIGGTLTHMIALRELGDVVLLDISDGIPQGKALDIAESSPIDGFNVNITGTNRYEDIKNSDAIIITAGIARKPGMSRDDLLQTNAKVMKEVGENIKKYSPNAFVIVVTNPLDAMVSVVHKFSNLPTNMIVGMAGVLDSSRFRYFLASELNISVEDISAFVLGGHGDTMVPLINCASVAGVPLTQIIDMGLITQKKVDEIVERTRNGGKEIVDLLKSGSAYYAPASSAICMLESYLKDKRRILPCAAYLNGEYGVEELFIGVPVIIGKNGIEKILEVKMNDSEQEMFNKSVNSVRELVKSLGS.

NAD(+) contacts are provided by residues 12-17 (GAGNIG) and D36. Substrate-binding residues include R85 and R91. NAD(+) contacts are provided by residues N98 and 121–123 (VTN). Residues N123 and R154 each contribute to the substrate site. The active-site Proton acceptor is H178.

It belongs to the LDH/MDH superfamily. MDH type 3 family.

The enzyme catalyses (S)-malate + NAD(+) = oxaloacetate + NADH + H(+). In terms of biological role, catalyzes the reversible oxidation of malate to oxaloacetate. The protein is Malate dehydrogenase of Wolbachia pipientis wMel.